Here is a 258-residue protein sequence, read N- to C-terminus: Ribosomal RNA small subunit methyltransferase J (258 aa).

Residues 123–124 (ER) and Asp-177 contribute to the S-adenosyl-L-methionine site. Residues 232-258 (IDGPKPSHSLEGKSSRYDIYPKKALKA) form a disordered region. A compositionally biased stretch (basic and acidic residues) spans 239 to 252 (HSLEGKSSRYDIYP).

The protein belongs to the methyltransferase superfamily. RsmJ family.

It is found in the cytoplasm. It carries out the reaction guanosine(1516) in 16S rRNA + S-adenosyl-L-methionine = N(2)-methylguanosine(1516) in 16S rRNA + S-adenosyl-L-homocysteine + H(+). In terms of biological role, specifically methylates the guanosine in position 1516 of 16S rRNA. This Pseudomonas putida (strain ATCC 47054 / DSM 6125 / CFBP 8728 / NCIMB 11950 / KT2440) protein is Ribosomal RNA small subunit methyltransferase J.